The following is an 888-amino-acid chain: Transmembrane channel-like protein 2 (888 aa).

Residues 1 to 128 are disordered; that stretch reads MSPQLKSLDE…SLGSSVSTGD (128 aa). The Cytoplasmic portion of the chain corresponds to 1-228; it reads MSPQLKSLDE…KIKDIESHFG (228 aa). Basic and acidic residues-rich tracts occupy residues 7–16, 32–44, and 87–110; these read SLDEEGDKSA, DGHR…KDPA, and RTSL…EAGK. Polar residues predominate over residues 117–128; it reads STSLGSSVSTGD. Residues 229 to 266 traverse the membrane as a helical segment; it reads SSVASYFIFLRWMYGVNLVLFGLIFGLVIIPEVLMGMP. Residues 267 to 317 lie on the Extracellular side of the membrane; it reads YGSIPRKTVPRAEEERAMDFSVLWDFEGYIKYSALFYGYYNNQRTIGWLRY. A helical transmembrane segment spans residues 318–350; sequence RLPMAYFMVGVSVFGYSLMIVIRSMASNTQGST. Topologically, residues 351–406 are cytoplasmic; that stretch reads SEGDSDSFTFSFKMFTSWDYLIGNSETADNKYVSITTSFKESIVDEQESNKEGNIH. The helical transmembrane segment at 407–437 threads the bilayer; the sequence is LTRFLRVLANFLILCCLCGSGYLIYFVVKRS. Over 438 to 447 the chain is Extracellular; sequence QEFSKMQNVS. The helical transmembrane segment at 448–475 threads the bilayer; it reads WYERNEVEIVMSLLGMFCPPLFETIAAL. At 476–479 the chain is on the cytoplasmic side; it reads ENYH. The chain crosses the membrane as a helical span at residues 480–514; that stretch reads PRTGLKWQLGRIFALFLGNLYTFLLALMDDVHLKL. Topologically, residues 515–556 are extracellular; that stretch reads SNEEKIKNITHWTLFNYYNSSGGNESVPRPPPHPADVPRGSC. A helical membrane pass occupies residues 557–594; that stretch reads WETAVGIEFMRLTVSDMLVTYLTILVGDFLRACFVRFM. Topologically, residues 595–613 are cytoplasmic; it reads NHCWCWDLEAGFPSYAEFD. A helical membrane pass occupies residues 614-634; the sequence is ISGNVLGLIFNQGMIWMGSFY. At 635 to 637 the chain is on the extracellular side; the sequence is APG. A helical transmembrane segment spans residues 638-660; sequence LVGINVLRLLTSMYFQCWAVMSS. The Cytoplasmic portion of the chain corresponds to 661 to 674; it reads NVPHERVFKASRSN. A helical membrane pass occupies residues 675 to 698; that stretch reads NFYMGLLLLVLFLSLLPVAYTVMS. The Extracellular portion of the chain corresponds to 699-741; the sequence is LPPSFDCGPFSGKNRMYDVLHETIENDFPKFLGKIFAFLANPG. A helical transmembrane segment spans residues 742 to 775; that stretch reads LIIPAILLMFLAIYYLNSVSKSLSRANAQLRKKI. The Cytoplasmic segment spans residues 776–888; that stretch reads QALREVEKNH…SGKRTQRPHN (113 aa). Positions 813–888 are disordered; that stretch reads LTKEEPTSHS…SGKRTQRPHN (76 aa). 2 stretches are compositionally biased toward polar residues: residues 836–851 and 866–881; these read PHTS…STSW and GQPQ…PSGK.

The protein belongs to the TMC family. Forms the MET channel composed of TMC dimer (TMC1 or TMC2), TMIE, TOMT, CIB (CIB2 or CIB3), LHFPL5 and PDH15. The interaction of TMC1 and TMC2 with TOMT is required for the transportation of TMC1/2 into the stereocilia of hair cells. Interacts (via N-terminus) with both isoforms CD1 and CD3 of PCDH15. Can form a heterodimer with TMC1, TMC5 or TMC7. In terms of tissue distribution, inner ear and testis. Expressed in cochlear inner and outer hair cells and vestibular organ hair cells.

Its subcellular location is the cell membrane. It carries out the reaction Ca(2+)(in) = Ca(2+)(out). Pore-forming subunit of the mechanotransducer (MET) non-selective cation channel complex located at the tips of stereocilia of cochlear hair cells and that mediates sensory transduction in the auditory system. The MET complex is composed of two dimeric pore-forming ion-conducting transmembrane TMC (TMC1 or TMC2) subunits, several auxiliary proteins including LHFPL5, TMIE, CIB2/3 and TOMT, the tip-link PCDH15, and possibly the PIEZO subunits. MET channel is activated by tension in the tip-link extending from the side wall of one stereocilium to the tip of the adjacent shorter stereocilium, where the channel is located. TMC2 MET channel is highly permeable to calcium and likely transports monovalent cations. Also involved in vestibular hair cell transduction current of the mammalian inner ear. The chain is Transmembrane channel-like protein 2 from Mus musculus (Mouse).